Reading from the N-terminus, the 319-residue chain is Ribosomal large subunit pseudouridine synthase C (319 aa).

The S4 RNA-binding domain maps to 20-83 (QRIDNFLRTQ…AEREEEAVSP (64 aa)). The active site involves aspartate 144.

The protein belongs to the pseudouridine synthase RluA family.

The enzyme catalyses uridine(955/2504/2580) in 23S rRNA = pseudouridine(955/2504/2580) in 23S rRNA. Responsible for synthesis of pseudouridine from uracil at positions 955, 2504 and 2580 in 23S ribosomal RNA. This is Ribosomal large subunit pseudouridine synthase C (rluC) from Escherichia coli O6:H1 (strain CFT073 / ATCC 700928 / UPEC).